The following is a 254-amino-acid chain: Attacin-A (254 aa).

Positions 1–18 are cleaved as a signal peptide; it reads MFTYKLILGLVLVVSASA. The propeptide occupies 19–62; the sequence is RYLVFEDLEGESYLVPNQAEDEQVLEGEPFYENAVQLASPRVRR.

This sequence belongs to the attacin/sarcotoxin-2 family.

The protein localises to the secreted. In terms of biological role, hemolymph antibacterial protein. The polypeptide is Attacin-A (Trichoplusia ni (Cabbage looper)).